The primary structure comprises 848 residues: MPGPRPRKGPKTSGQGAETAKQLGLFVEFNPEDMLLGVDETEDDGDLEAELLALTGETASRSRKPAPKGQAPLPMAHIEKLAADCMRDVEEDEEEEGLEDDADLLTELQEVLGEDEEAGLLDGSEAASPDLCEEKTWDNTELPVEQAACQQAVPAAAQAGGPRGLQALLEERIRNYREAAASAKEAGEAAKARRCERGLKTLQSQLATVRKGGKICEDEIPPPVALGKRPPAPQERAIKNPEIDSPGPCAMEPGNLSQPESSLPAIAPLPDSDPDPQALLLARQREYKAAALDAKRAGDLDRARELMRIGKRFGTVLEALEKGQPVDLSGMPPAPADLKALPQASKASSATQGLSPAVEQMQPVMASDLPATPVAPAEPTTVLDALQQRLNKYREAGIQARANGDERKARMHDRIAKQYQDAVRAHQAGQKVDFAELPVPPGFPPIPGLEPRKGSEQDSVAATLATAQKLASEDAALVDDDEESDTPAQAPLAKKPAQTLVSPSHLLTEPKASSSKESLSPSVREQVTLLEARKLQYQRAALQAKRRQDLEQAKSHLRVAKSLEAQIIQARAGQPIDLSKVPSPLTDEEGDFILIHHEDLRLSQKAEEVYAQLQKMLQEQQAKCLLFSKQYMHQGNVAETTRFERLAEDRKKQLEILQLAQAQGLDPPSHHFELKTFQTVRIFSELNSTEMHLIIVRGMNLPAPPGVTPDDLDAFVRFEFHYPNSDQAQKSKTAVVKNTNSPEFEQVFKLNINRNHRGFRRVIQSKGIKFEIFHKGSFFRSDKLVGTAHLKLERLEKECEIREIMEVLDGRKPTGGKLEVKVRLREPLSSQDVQTVTENWLVLEPRGL.

Basic residues predominate over residues 1–10; sequence MPGPRPRKGP. Disordered stretches follow at residues 1-21 and 53-75; these read MPGP…ETAK and ALTG…PLPM. Residues 165 to 193 are a coiled coil; that stretch reads LQALLEERIRNYREAAASAKEAGEAAKAR. Disordered stretches follow at residues 217 to 276, 326 to 353, 433 to 460, and 476 to 523; these read EDEI…DPDP, VDLS…ATQG, DFAE…QDSV, and ALVD…SPSV. Positions 438–448 are enriched in pro residues; the sequence is PVPPGFPPIPG. Ser-455 bears the Phosphoserine mark. The span at 476-485 shows a compositional bias: acidic residues; that stretch reads ALVDDDEESD. Low complexity-rich tracts occupy residues 487-498 and 509-522; these read PAQAPLAKKPAQ and EPKA…LSPS. Phosphoserine is present on Ser-583. A Phosphothreonine modification is found at Thr-586. The stretch at 600-626 forms a coiled coil; the sequence is LRLSQKAEEVYAQLQKMLQEQQAKCLL. Positions 666 to 805 constitute a C2 domain; it reads DPPSHHFELK…EKECEIREIM (140 aa).

It belongs to the CC2D1 family. In terms of assembly, interacts with CHMP4B.

Its subcellular location is the nucleus. Its function is as follows. Transcription factor that binds specifically to the DRE (dual repressor element) and represses HTR1A gene transcription in neuronal cells. In Mus musculus (Mouse), this protein is Coiled-coil and C2 domain-containing protein 1B (Cc2d1b).